Reading from the N-terminus, the 254-residue chain is Mitochondrial cardiolipin hydrolase (254 aa).

The Mitochondrial intermembrane portion of the chain corresponds to 1-9 (MERFRWQVA). The segment at 1-43 (MERFRWQVAAVAAVGLALALEALPSVLCWLRAGRRQQQRPPRR) is required for mitochondrial localization. A helical membrane pass occupies residues 10 to 32 (AVAAVGLALALEALPSVLCWLRA). At 33–254 (GRRQQQRPPR…SKCSHHLSQV (222 aa)) the chain is on the cytoplasmic side. Residues 49–82 (PSQVTCTEALLQAPGEAPSGPPAGCRCSLPHGES) form a C3H1-type; atypical zinc finger. The 28-residue stretch at 155–182 (DLGYMHHKFAIVDKKVLITGSLNWTTQA) folds into the PLD phosphodiesterase domain. Residues H160, K162, and D167 contribute to the active site.

Belongs to the phospholipase D family. MitoPLD/Zucchini subfamily. In terms of assembly, homodimer. Interacts with MOV10L1. Interacts with MIGA1 and MIGA2; possibly facilitating homodimer formation. Interacts with GK2.

The protein resides in the mitochondrion outer membrane. It is found in the nucleus membrane. It localises to the cell membrane. The protein localises to the golgi apparatus. The enzyme catalyses a cardiolipin + H2O = a 1,2-diacyl-sn-glycero-3-phospho-(1'-sn-glycerol) + a 1,2-diacyl-sn-glycero-3-phosphate + H(+). Its activity is regulated as follows. Single stranded DNA (ssDNA) hydrolase activity does not depend upon, but is stimulated by the presence of Ca(2+) and Mn(2+). MIGA1 and MIGA2 increase PLD6 self-association affinity and affects the homodimer conformation facilitating its phospholipase activity over the nuclease activity. MYC induces its expression and stimulates its phospholipase activity. Presents phospholipase and nuclease activities, depending on the different physiological conditions. Interaction with Mitoguardin (MIGA1 or MIGA2) affects the dimer conformation, facilitating the lipase activity over the nuclease activity. Plays a key role in mitochondrial fusion and fission via its phospholipase activity. In its phospholipase role, it uses the mitochondrial lipid cardiolipin as substrate to generate phosphatidate (PA or 1,2-diacyl-sn-glycero-3-phosphate), a second messenger signaling lipid. Production of PA facilitates Mitofusin-mediated fusion, whereas the cleavage of PA by the Lipin family of phosphatases produces diacylgycerol (DAG) which promotes mitochondrial fission. Both Lipin and DAG regulate mitochondrial dynamics and membrane fusion/fission, important processes for adapting mitochondrial metabolism to changes in cell physiology. Mitochondrial fusion enables cells to cope with the increased nucleotide demand during DNA synthesis. Mitochondrial function and dynamics are closely associated with biological processes such as cell growth, proliferation, and differentiation. Mediator of MYC activity, promotes mitochondrial fusion and activates AMPK which in turn inhibits YAP/TAZ, thereby inducing cell growth and proliferation. The endonuclease activity plays a critical role in PIWI-interacting RNA (piRNA) biogenesis during spermatogenesis. Implicated in spermatogenesis and sperm fertility in testicular germ cells, its single strand-specific nuclease activity is critical for the biogenesis/maturation of PIWI-interacting RNA (piRNA). MOV10L1 selectively binds to piRNA precursors and funnels them to the endonuclease that catalyzes the first cleavage step of piRNA processing to generate piRNA intermediate fragments that are subsequently loaded to Piwi proteins. Cleaves either DNA or RNA substrates with similar affinity, producing a 5' phosphate end, in this way it participates in the processing of primary piRNA transcripts. piRNAs provide essential protection against the activity of mobile genetic elements. piRNA-mediated transposon silencing is thus critical for maintaining genome stability, in particular in germline cells when transposons are mobilized as a consequence of wide-spread genomic demethylation. PA may act as signaling molecule in the recognition/transport of the precursor RNAs of primary piRNAs. Interacts with tesmin in testes, suggesting a role in spermatogenesis via association with its interacting partner. The polypeptide is Mitochondrial cardiolipin hydrolase (PLD6) (Canis lupus familiaris (Dog)).